A 556-amino-acid polypeptide reads, in one-letter code: Zinc finger protein GLI1 (556 aa).

Disordered stretches follow at residues 57 to 83 (TEHP…KKRA), 133 to 178 (SLGY…TPAR), and 200 to 222 (KYPE…QDPL). The span at 135–148 (GYQNPPGQQKGQGQ) shows a compositional bias: low complexity. 5 consecutive C2H2-type zinc fingers follow at residues 247-272 (TNCY…NNEH), 280-307 (FVCH…MRRH), 313-337 (HKCT…LRSH), 343-368 (YVCE…NRTH), and 374-399 (YICK…KTVH). Residues 295–303 (KAQYMLVVH) form an interaction with DNA region. Interaction with DNA stretches follow at residues 357-362 (ASDRAK) and 387-393 (DPSSLRK). Residues 387–492 (DPSSLRKHVK…VEMTGNTGGS (106 aa)) are disordered. Residues 454 to 472 (SKPQPSPGGQSSCSSDRSP) are compositionally biased toward low complexity.

It belongs to the GLI C2H2-type zinc-finger protein family.

The protein localises to the cytoplasm. It is found in the nucleus. Its function is as follows. Acts as a transcriptional activator. Binds to the DNA consensus sequence 5'-GACCACCCA-3'. May regulate the transcription of specific genes during normal development. May play a role in craniofacial development and digital development, as well as development of the central nervous system and gastrointestinal tract. Mediates SHH signaling. Plays a role in cell proliferation and differentiation via its role in SHH signaling. This Gallus gallus (Chicken) protein is Zinc finger protein GLI1 (GLI1).